The primary structure comprises 412 residues: Serine hydroxymethyltransferase (412 aa).

Residues Leu-125 and 129–131 (GHL) each bind (6S)-5,6,7,8-tetrahydrofolate. Lys-234 bears the N6-(pyridoxal phosphate)lysine mark. Glu-250 serves as a coordination point for (6S)-5,6,7,8-tetrahydrofolate.

Belongs to the SHMT family. As to quaternary structure, homodimer. Pyridoxal 5'-phosphate is required as a cofactor.

It is found in the cytoplasm. The catalysed reaction is (6R)-5,10-methylene-5,6,7,8-tetrahydrofolate + glycine + H2O = (6S)-5,6,7,8-tetrahydrofolate + L-serine. Its pathway is one-carbon metabolism; tetrahydrofolate interconversion. The protein operates within amino-acid biosynthesis; glycine biosynthesis; glycine from L-serine: step 1/1. In terms of biological role, catalyzes the reversible interconversion of serine and glycine with tetrahydrofolate (THF) serving as the one-carbon carrier. This reaction serves as the major source of one-carbon groups required for the biosynthesis of purines, thymidylate, methionine, and other important biomolecules. Also exhibits THF-independent aldolase activity toward beta-hydroxyamino acids, producing glycine and aldehydes, via a retro-aldol mechanism. This Deinococcus geothermalis (strain DSM 11300 / CIP 105573 / AG-3a) protein is Serine hydroxymethyltransferase.